The primary structure comprises 307 residues: Coproporphyrin III ferrochelatase (307 aa).

Fe-coproporphyrin III contacts are provided by residues Tyr-12, Arg-29, 45 to 46, Ser-53, and Tyr-124; that span reads RY. Fe(2+)-binding residues include His-181 and Glu-263.

Belongs to the ferrochelatase family.

Its subcellular location is the cytoplasm. It catalyses the reaction Fe-coproporphyrin III + 2 H(+) = coproporphyrin III + Fe(2+). The protein operates within porphyrin-containing compound metabolism; protoheme biosynthesis. Its function is as follows. Involved in coproporphyrin-dependent heme b biosynthesis. Catalyzes the insertion of ferrous iron into coproporphyrin III to form Fe-coproporphyrin III. In Staphylococcus epidermidis (strain ATCC 35984 / DSM 28319 / BCRC 17069 / CCUG 31568 / BM 3577 / RP62A), this protein is Coproporphyrin III ferrochelatase.